The primary structure comprises 329 residues: Probable cell division protein WhiA (329 aa).

Residues 275-308 (SLEELGALADPPLTKDAVAGRIRRLLAMADKRAQ) constitute a DNA-binding region (H-T-H motif).

Belongs to the WhiA family.

Its function is as follows. Involved in cell division and chromosome segregation. In Streptomyces avermitilis (strain ATCC 31267 / DSM 46492 / JCM 5070 / NBRC 14893 / NCIMB 12804 / NRRL 8165 / MA-4680), this protein is Probable cell division protein WhiA.